Reading from the N-terminus, the 315-residue chain is Protein rlx (315 aa).

Residues 263–315 (TEQLKQRRVERAQETKQAHSKISSRDTRESENQRERAKGNNIRIERGDEGLSR) are disordered.

Functionally, this protein is probably required for relaxation complex formation and plasmid mobilization by conjugative plasmids. In Staphylococcus aureus, this protein is Protein rlx (rlx).